The primary structure comprises 155 residues: UPF0461 protein C5orf24 homolog (155 aa).

The span at 60-69 (NETHLQTSTS) shows a compositional bias: polar residues. A disordered region spans residues 60 to 155 (NETHLQTSTS…QQALMCSSDA (96 aa)). Residues 78-92 (LKKKKNVGRSGKRGR) show a composition bias toward basic residues. Over residues 94 to 107 (SGTTKSAGYRTSTG) the composition is skewed to polar residues.

The protein belongs to the UPF0461 family.

The polypeptide is UPF0461 protein C5orf24 homolog (Xenopus laevis (African clawed frog)).